Reading from the N-terminus, the 2957-residue chain is Toxin PAU_02230 (2957 aa).

The disordered stretch occupies residues 949-968; the sequence is TSVSPAETAQSTPEPLSDFA. The interval 2115–2144 is membrane localization domain that interacts with the inner leaflet of the plasma membrane; the sequence is EWFKHSETGLKGGGPIDDIRKYIARKSAIK. The interval 2115-2449 is tyrosine glycosyltransferase PaToxG; that stretch reads EWFKHSETGL…TSTIVTPLAP (335 aa). UDP-N-acetyl-alpha-D-glucosamine is bound by residues 2169–2171 and 2259–2260; these read IWI and SD. Positions 2276 and 2278 each coordinate a divalent metal cation. The short motif at 2276–2279 is the DxDD motif element; it reads DIDD. A UDP-N-acetyl-alpha-D-glucosamine-binding site is contributed by Asn2312. The sseI-like deamidase PaToxD stretch occupies residues 2450-2672; it reads KTEMLPPVPS…NYSVNPTAEN (223 aa). Catalysis depends on for deamidase activity residues Cys2509, His2547, and Asp2562. Positions 2667 to 2705 are disordered; sequence NPTAENLSPPPPPPIPSHGQVPKTVTPPPPPMRSPLSLS.

A divalent metal cation serves as cofactor.

It localises to the secreted. It is found in the host cell membrane. It catalyses the reaction L-tyrosyl-[protein] + UDP-N-acetyl-alpha-D-glucosamine = O-(N-acetyl-alpha-D-glucosaminyl)-L-tyrosyl-[protein] + UDP + H(+). The catalysed reaction is L-glutaminyl-[protein] + H2O = L-glutamyl-[protein] + NH4(+). Functionally, toxin that acts on host cells by modifying Rho proteins by tyrosine GlcNAcylation and heterotrimeric G alpha proteins by deamidation. Catalyzes the mono-O-GlcNAcylation of small GTPases of the Rho family (RhoA, RhoB, RhoC, Rac1, Rac2, Rac3, Cdc42) in eukaryotic host cells at the conserved tyrosine residue located in the switch I region (Tyr-32/34), using UDP-N-acetylglucosamine (UDP-GlcNAc) as the sugar donor; other GTPases of the Rho, Ras or Rab families are not substrates. Tyrosine glycosylation inhibits Rho activation and prevents interaction with downstream effectors, resulting in actin disassembly, inhibition of phagocytosis, cell rounding, and toxicity toward insects and mammalian cells. Also catalyzes the deamidation of the catalytic glutamine in heterotrimeric G alpha proteins (Gi, Gq/11), which blocks GTP hydrolysis and arrests the G proteins in a permanent active state leading to activation of Rho GTPases. Thus, PaTox hijacks host GTPase signaling in a bidirectional manner by deamidation-induced activation and glycosylation-induced inactivation of GTPases. The sequence is that of Toxin PAU_02230 from Photorhabdus asymbiotica subsp. asymbiotica (strain ATCC 43949 / 3105-77) (Xenorhabdus luminescens (strain 2)).